A 310-amino-acid chain; its full sequence is Mitogen-activated protein kinase kinase 9 (310 aa).

The region spanning 47–306 (LEKLNVLGCG…APQLLAHPFL (260 aa)) is the Protein kinase domain. ATP contacts are provided by residues 53–61 (LGCGNGGIV) and K76. Catalysis depends on D167, which acts as the Proton acceptor. Phosphoserine occurs at positions 195 and 201. T205 bears the Phosphothreonine mark.

Belongs to the protein kinase superfamily. STE Ser/Thr protein kinase family. MAP kinase kinase subfamily. In terms of processing, phosphorylation at Ser-195 and Ser-201 by MAP kinase kinase kinases positively regulates kinase activity. Autophosphorylated.

It is found in the cytoplasm. Its subcellular location is the nucleus. The enzyme catalyses L-seryl-[protein] + ATP = O-phospho-L-seryl-[protein] + ADP + H(+). It catalyses the reaction L-threonyl-[protein] + ATP = O-phospho-L-threonyl-[protein] + ADP + H(+). It carries out the reaction L-tyrosyl-[protein] + ATP = O-phospho-L-tyrosyl-[protein] + ADP + H(+). Functionally, MKK9-MPK3/MPK6 module phosphorylates and activates EIN3, leading to the promotion of EIN3-mediated transcription in ethylene signaling. Autophosphorylates and also phosphorylates MPK3 and MPK6. Plays an important role in ethylene and camalexin biosynthesis and in salt stress response. MKK9-MPK6 module positively regulates leaf senescence. This Arabidopsis thaliana (Mouse-ear cress) protein is Mitogen-activated protein kinase kinase 9 (MKK9).